The following is a 330-amino-acid chain: Poly(3-hydroxyalkanoate) polymerase subunit PhaE (330 aa).

Positions 298 to 328 form a coiled coil; sequence RSEVDEIHQTIYQLRKEVKSLKKRLGETEAN.

Belongs to the PHA/PHB synthase family. Type III PhaE subfamily. Forms a heterodimer with PhaC, which may multimerize in the presence of 3-hydroxybutyryl-CoA. Both subunits are required for PHB synthesis in E.coli and in PHA-negative A.eutrophus.

The protein resides in the cytoplasm. The protein operates within biopolymer metabolism; poly-(R)-3-hydroxybutanoate biosynthesis. In terms of biological role, when expressed in E.coli with Synechocystis PhaC and C.necator PhaA and PhaB, confers the ability to synthesize up to 13% (w/w) poly(3-hydroxybutyrate) (PHB) depending on the carbon source; all 4 genes are necessary for PHB production. Cell-free in vitro coexpression with PhaE gives a heterodimer able to polymerize 3-hydroxybutyrate-CoA. This subunit has no catalytic activity but enhances the activity of PhaC, the catalytic subunit. The sequence is that of Poly(3-hydroxyalkanoate) polymerase subunit PhaE from Synechocystis sp. (strain ATCC 27184 / PCC 6803 / Kazusa).